The following is a 388-amino-acid chain: STE20-related kinase adapter protein strd-1 (388 aa).

Residues 52–335 (YDCVRYMGTC…ASDLKSSAWL (284 aa)) enclose the Protein kinase domain. ATP is bound by residues 58–66 (MGTCNGGQI) and Lys-82.

Belongs to the protein kinase superfamily. STE Ser/Thr protein kinase family. STE20 subfamily. In terms of assembly, interacts with sad-1. Interacts with par-4. As to expression, expressed in nervous system, pharynx and excretory canal. Expressed in germline.

Its subcellular location is the perikaryon. It is found in the nucleus. The protein localises to the cell projection. The protein resides in the dendrite. It localises to the axon. Its subcellular location is the synapse. It is found in the cytoplasm. The protein localises to the cell cortex. Functionally, pseudokinase which may act as an adapter for kinases sad-1 and par-4 and thereby is involved in several developmental processes. Regulates cell-autonomously both neuronal polarity and synaptic organization when bound to sad-1. Required for sad-1 localization to synapses. Required to establish germline stem cell (GSC) quiescence during dauer development, to promote cell shedding during embryogenesis and to control asymmetric cell division of the Q.p neuroblast lineage, probably when bound to par-4. May be involved in maintaining the integrity of the early embryonic cortex when bound to par-4. The protein is STE20-related kinase adapter protein strd-1 of Caenorhabditis elegans.